A 150-amino-acid chain; its full sequence is Large ribosomal subunit protein bL9 (150 aa).

Belongs to the bacterial ribosomal protein bL9 family.

In terms of biological role, binds to the 23S rRNA. The protein is Large ribosomal subunit protein bL9 of Photorhabdus laumondii subsp. laumondii (strain DSM 15139 / CIP 105565 / TT01) (Photorhabdus luminescens subsp. laumondii).